Consider the following 431-residue polypeptide: Histidine--tRNA ligase (431 aa).

This sequence belongs to the class-II aminoacyl-tRNA synthetase family. Homodimer.

Its subcellular location is the cytoplasm. The catalysed reaction is tRNA(His) + L-histidine + ATP = L-histidyl-tRNA(His) + AMP + diphosphate + H(+). In Leifsonia xyli subsp. xyli (strain CTCB07), this protein is Histidine--tRNA ligase (hisS).